We begin with the raw amino-acid sequence, 177 residues long: Inorganic pyrophosphatase (177 aa).

K31, R45, and Y57 together coordinate substrate. Residues D67, D72, and D104 each coordinate Mg(2+). Y141 is a binding site for substrate.

It belongs to the PPase family. Homohexamer. Mg(2+) serves as cofactor.

It localises to the cytoplasm. It catalyses the reaction diphosphate + H2O = 2 phosphate + H(+). Its function is as follows. Catalyzes the hydrolysis of inorganic pyrophosphate (PPi) forming two phosphate ions. This is Inorganic pyrophosphatase from Halobacterium salinarum (strain ATCC 700922 / JCM 11081 / NRC-1) (Halobacterium halobium).